A 195-amino-acid polypeptide reads, in one-letter code: Imidazoleglycerol-phosphate dehydratase (195 aa).

Belongs to the imidazoleglycerol-phosphate dehydratase family.

It localises to the cytoplasm. It carries out the reaction D-erythro-1-(imidazol-4-yl)glycerol 3-phosphate = 3-(imidazol-4-yl)-2-oxopropyl phosphate + H2O. It functions in the pathway amino-acid biosynthesis; L-histidine biosynthesis; L-histidine from 5-phospho-alpha-D-ribose 1-diphosphate: step 6/9. The chain is Imidazoleglycerol-phosphate dehydratase from Burkholderia thailandensis (strain ATCC 700388 / DSM 13276 / CCUG 48851 / CIP 106301 / E264).